A 504-amino-acid polypeptide reads, in one-letter code: Aspartyl/glutamyl-tRNA(Asn/Gln) amidotransferase subunit B (504 aa).

This sequence belongs to the GatB/GatE family. GatB subfamily. In terms of assembly, heterotrimer of A, B and C subunits.

The catalysed reaction is L-glutamyl-tRNA(Gln) + L-glutamine + ATP + H2O = L-glutaminyl-tRNA(Gln) + L-glutamate + ADP + phosphate + H(+). The enzyme catalyses L-aspartyl-tRNA(Asn) + L-glutamine + ATP + H2O = L-asparaginyl-tRNA(Asn) + L-glutamate + ADP + phosphate + 2 H(+). In terms of biological role, allows the formation of correctly charged Asn-tRNA(Asn) or Gln-tRNA(Gln) through the transamidation of misacylated Asp-tRNA(Asn) or Glu-tRNA(Gln) in organisms which lack either or both of asparaginyl-tRNA or glutaminyl-tRNA synthetases. The reaction takes place in the presence of glutamine and ATP through an activated phospho-Asp-tRNA(Asn) or phospho-Glu-tRNA(Gln). The chain is Aspartyl/glutamyl-tRNA(Asn/Gln) amidotransferase subunit B from Rhodococcus opacus (strain B4).